Here is a 215-residue protein sequence, read N- to C-terminus: Cytochrome b6 (215 aa).

Residues 32–52 (IFYCLGGITLTCFLVQVATGF) traverse the membrane as a helical segment. Residue Cys35 coordinates heme c. Residues His86 and His100 each contribute to the heme b site. The next 3 membrane-spanning stretches (helical) occupy residues 90-110 (ASMMVLMMILHVFRVYLTGGF), 116-136 (LTWVTGVILAVLTVSFGVTGY), and 186-206 (LHTFILPFLTAVFMLMHFLMI). His187 and His202 together coordinate heme b.

The protein belongs to the cytochrome b family. PetB subfamily. As to quaternary structure, the 4 large subunits of the cytochrome b6-f complex are cytochrome b6, subunit IV (17 kDa polypeptide, PetD), cytochrome f and the Rieske protein, while the 4 small subunits are PetG, PetL, PetM and PetN. The complex functions as a dimer. It depends on heme b as a cofactor. The cofactor is heme c.

The protein localises to the plastid. Its subcellular location is the chloroplast thylakoid membrane. Its function is as follows. Component of the cytochrome b6-f complex, which mediates electron transfer between photosystem II (PSII) and photosystem I (PSI), cyclic electron flow around PSI, and state transitions. This chain is Cytochrome b6, found in Welwitschia mirabilis (Tree tumbo).